Consider the following 249-residue polypeptide: Derlin-2.1 (249 aa).

Topologically, residues 1 to 21 are cytoplasmic; the sequence is MAQAVEEWYRQMPIITRSYLT. A helical membrane pass occupies residues 22–42; it reads AAVVTTVGCTLEIISPYHLYL. Topologically, residues 43–96 are lumenal; sequence NPKLVVQHYEIWRLVTNFLYFRKMDLDFLFHMFFLARYCKLLEENSFRGRTADF. A helical membrane pass occupies residues 97–117; the sequence is FYMLLFGATVLTSIVLIGGMI. Topologically, residues 118–122 are cytoplasmic; the sequence is PYISE. Residues 123 to 143 form a helical membrane-spanning segment; sequence TFARILFLSNSLTFMMVYVWS. Over 144 to 152 the chain is Lumenal; sequence KHNPFIHMS. Residues 153–173 form a helical membrane-spanning segment; it reads FLGLFTFTAAYLPWVLLGFSI. Residues 174–249 lie on the Cytoplasmic side of the membrane; the sequence is LVGSSTWVDL…GAMGLDPQAQ (76 aa).

It belongs to the derlin family. Expressed in roots, stalks, leaves, embryo and endosperm.

Its subcellular location is the endoplasmic reticulum membrane. Functionally, may be involved in the degradation process of specific misfolded endoplasmic reticulum (ER) luminal proteins. This Zea mays (Maize) protein is Derlin-2.1 (DER2.1).